The primary structure comprises 700 residues: Polyribonucleotide nucleotidyltransferase (700 aa).

Asp485 and Asp491 together coordinate Mg(2+). The KH domain maps to 552-611 (PRITVIKINPEKIRDVIGKGGAVIRALTEETGTTIELEDDGTVKIASSNGEATKEAIRRI). The region spanning 621 to 689 (GRIYNGKVIR…RQGRVRLSIK (69 aa)) is the S1 motif domain.

It belongs to the polyribonucleotide nucleotidyltransferase family. As to quaternary structure, component of the RNA degradosome, which is a multiprotein complex involved in RNA processing and mRNA degradation. The cofactor is Mg(2+).

It localises to the cytoplasm. It catalyses the reaction RNA(n+1) + phosphate = RNA(n) + a ribonucleoside 5'-diphosphate. Involved in mRNA degradation. Catalyzes the phosphorolysis of single-stranded polyribonucleotides processively in the 3'- to 5'-direction. The polypeptide is Polyribonucleotide nucleotidyltransferase (Shewanella baltica (strain OS155 / ATCC BAA-1091)).